Reading from the N-terminus, the 442-residue chain is Threonine/serine transporter TdcC (442 aa).

11 helical membrane-spanning segments follow: residues 21 to 41, 44 to 64, 96 to 116, 139 to 159, 162 to 182, 206 to 226, 258 to 278, 312 to 332, 364 to 384, 388 to 408, and 422 to 442; these read TTWTLGLFGTAIGAGVLFFPI, GFGGLIPILIMLVLAYPIAFL, GVVITFLYFFAICPLLWIYGV, VVALALLLLMAVVIYFGKDLM, VMSFLVFPFIACLVLISLSLI, ILVTVWLGISIMVFSFNFSPI, ASILMVAVVMFFAFSCLFTLS, ITLEYAASLIALVAIFKSFFG, LISMFFIMGSTWLVAYINPNI, IEAMGAPIIASLLCLLPMYAI, and ENYFVTIVGLLTIFNIVYKLL.

The protein belongs to the amino acid/polyamine transporter 2 family. SdaC/TdcC subfamily.

The protein localises to the cell inner membrane. It catalyses the reaction L-threonine(in) + H(+)(in) = L-threonine(out) + H(+)(out). It carries out the reaction L-serine(in) + H(+)(in) = L-serine(out) + H(+)(out). Its function is as follows. Involved in the import of threonine and serine into the cell, with the concomitant import of a proton (symport system). The chain is Threonine/serine transporter TdcC from Yersinia enterocolitica serotype O:8 / biotype 1B (strain NCTC 13174 / 8081).